A 434-amino-acid chain; its full sequence is D-amino acid dehydrogenase (434 aa).

Val3–Tyr17 contacts FAD.

Belongs to the DadA oxidoreductase family. FAD serves as cofactor.

It carries out the reaction a D-alpha-amino acid + A + H2O = a 2-oxocarboxylate + AH2 + NH4(+). Its pathway is amino-acid degradation; D-alanine degradation; NH(3) and pyruvate from D-alanine: step 1/1. In terms of biological role, oxidative deamination of D-amino acids. This is D-amino acid dehydrogenase from Pseudomonas entomophila (strain L48).